The chain runs to 72 residues: HADGVFTSDYSRLLGQLSARKYLESLIXXXXXXXXXXXXXXXXXHSDALFTDTYTRLRKQMAMKKYLNSVLN.

Position 27 is an isoleucine amide (Ile27). Residue Asn72 is modified to Asparagine amide.

The protein belongs to the glucagon family.

The protein localises to the secreted. VIP is a neuropeptide involved in a diverse array of physiological processes through activating the PACAP subfamily of class B1 G protein-coupled receptors: VIP receptor 1 (VPR1) and VIP receptor 2 (VPR2). Abundantly expressed throughout the CNS and peripheral nervous systems where they primarily exert neuroprotective and immune modulatory roles. Also causes vasodilation, lowers arterial blood pressure, stimulates myocardial contractility, increases glycogenolysis and relaxes the smooth muscle of trachea, stomach and gall bladder. Its function is as follows. PHM-27 is a bioactive form from proteolysis of the same precursor protein, that causes vasodilation. It is a potent agonist of the calcitonin receptor CALCR, with similar efficacy as calcitonin. The sequence is that of VIP peptides (VIP) from Cavia porcellus (Guinea pig).